The sequence spans 810 residues: Bifunctional aspartokinase/homoserine dehydrogenase 2 (810 aa).

The aspartokinase stretch occupies residues 2–252 (SVIAQAGAKG…VKDACLLPLL (251 aa)). Residues 253-463 (RLDEASELAR…RAEKRIGLVL (211 aa)) are interface. The homoserine dehydrogenase stretch occupies residues 464–810 (FGKGNIGSRW…SDINRLAQLL (347 aa)). Residues asparagine 468 and isoleucine 469 each coordinate NADP(+). Isoleucine 469 and valine 498 together coordinate NAD(+). Isoleucine 469 is an NADPH binding site. NADP(+) is bound by residues arginine 501, threonine 549, and lysine 573. Threonine 549 contributes to the NAD(+) binding site. 2 residues coordinate NADPH: threonine 549 and lysine 573. 3 residues coordinate Na(+): valine 603, alanine 605, and leucine 607. NADP(+) is bound by residues glycine 658 and glutamate 661. Glutamate 661 and aspartate 672 together coordinate L-homoserine. The active-site Proton donor is the lysine 676. An NADP(+)-binding site is contributed by glycine 791. Glycine 791 provides a ligand contact to NAD(+). NADPH is bound at residue glycine 791.

The protein in the N-terminal section; belongs to the aspartokinase family. This sequence in the C-terminal section; belongs to the homoserine dehydrogenase family. In terms of assembly, homotetramer. Requires a metal cation as cofactor.

The catalysed reaction is L-homoserine + NADP(+) = L-aspartate 4-semialdehyde + NADPH + H(+). It carries out the reaction L-homoserine + NAD(+) = L-aspartate 4-semialdehyde + NADH + H(+). The enzyme catalyses L-aspartate + ATP = 4-phospho-L-aspartate + ADP. It participates in amino-acid biosynthesis; L-lysine biosynthesis via DAP pathway; (S)-tetrahydrodipicolinate from L-aspartate: step 1/4. The protein operates within amino-acid biosynthesis; L-methionine biosynthesis via de novo pathway; L-homoserine from L-aspartate: step 1/3. Its pathway is amino-acid biosynthesis; L-methionine biosynthesis via de novo pathway; L-homoserine from L-aspartate: step 3/3. It functions in the pathway amino-acid biosynthesis; L-threonine biosynthesis; L-threonine from L-aspartate: step 1/5. It participates in amino-acid biosynthesis; L-threonine biosynthesis; L-threonine from L-aspartate: step 3/5. In terms of biological role, bifunctional aspartate kinase and homoserine dehydrogenase that catalyzes the first and the third steps toward the synthesis of lysine, methionine and threonine from aspartate. The protein is Bifunctional aspartokinase/homoserine dehydrogenase 2 (metL) of Escherichia coli (strain K12).